A 264-amino-acid chain; its full sequence is Glutamate racemase (264 aa).

Residues 10-11 (DS) and 42-43 (YG) contribute to the substrate site. Cys-73 (proton donor/acceptor) is an active-site residue. Residue 74 to 75 (NT) participates in substrate binding. The active-site Proton donor/acceptor is Cys-183. Residue 184 to 185 (TH) coordinates substrate.

The protein belongs to the aspartate/glutamate racemases family.

It catalyses the reaction L-glutamate = D-glutamate. Its pathway is cell wall biogenesis; peptidoglycan biosynthesis. Functionally, provides the (R)-glutamate required for cell wall biosynthesis. This is Glutamate racemase from Streptococcus pyogenes serotype M4 (strain MGAS10750).